The following is a 249-amino-acid chain: Large ribosomal subunit protein uL4 (249 aa).

It belongs to the universal ribosomal protein uL4 family. Part of the 50S ribosomal subunit.

Its function is as follows. One of the primary rRNA binding proteins, this protein initially binds near the 5'-end of the 23S rRNA. It is important during the early stages of 50S assembly. It makes multiple contacts with different domains of the 23S rRNA in the assembled 50S subunit and ribosome. Functionally, forms part of the polypeptide exit tunnel. The sequence is that of Large ribosomal subunit protein uL4 from Methanoculleus marisnigri (strain ATCC 35101 / DSM 1498 / JR1).